The sequence spans 117 residues: Transcription elongation factor A protein-like 8 (117 aa).

Composition is skewed to basic and acidic residues over residues 1–10 and 61–75; these read MQKSCEENEG and FKED…PEEM. The tract at residues 1–75 is disordered; sequence MQKSCEENEG…PVRHLDPEEM (75 aa). Residues 73 to 100 adopt a coiled-coil conformation; that stretch reads EEMIRGVDELERLREEIRRVRNKFVMMH.

This sequence belongs to the TFS-II family. TFA subfamily.

It localises to the nucleus. Functionally, may be involved in transcriptional regulation. This is Transcription elongation factor A protein-like 8 (TCEAL8) from Homo sapiens (Human).